A 409-amino-acid chain; its full sequence is Na(+)-translocating NADH-quinone reductase subunit F (409 aa).

Residues 5–25 (FIFGIIAFTALVLVLAVIILF) form a helical membrane-spanning segment. The 2Fe-2S ferredoxin-type domain maps to 34-128 (GDITISINND…SMDVELPEEI (95 aa)). [2Fe-2S] cluster-binding residues include cysteine 71, cysteine 77, cysteine 80, and cysteine 112. Residues 131-271 (VKKWECTVIS…SGPFGEFFAK (141 aa)) form the FAD-binding FR-type domain.

It belongs to the NqrF family. As to quaternary structure, composed of six subunits; NqrA, NqrB, NqrC, NqrD, NqrE and NqrF. It depends on [2Fe-2S] cluster as a cofactor. The cofactor is FAD.

The protein resides in the cell inner membrane. It catalyses the reaction a ubiquinone + n Na(+)(in) + NADH + H(+) = a ubiquinol + n Na(+)(out) + NAD(+). In terms of biological role, NQR complex catalyzes the reduction of ubiquinone-1 to ubiquinol by two successive reactions, coupled with the transport of Na(+) ions from the cytoplasm to the periplasm. The first step is catalyzed by NqrF, which accepts electrons from NADH and reduces ubiquinone-1 to ubisemiquinone by a one-electron transfer pathway. The sequence is that of Na(+)-translocating NADH-quinone reductase subunit F from Actinobacillus pleuropneumoniae serotype 5b (strain L20).